The primary structure comprises 416 residues: Gamma-glutamyl phosphate reductase (416 aa).

The protein belongs to the gamma-glutamyl phosphate reductase family.

The protein resides in the cytoplasm. It catalyses the reaction L-glutamate 5-semialdehyde + phosphate + NADP(+) = L-glutamyl 5-phosphate + NADPH + H(+). It functions in the pathway amino-acid biosynthesis; L-proline biosynthesis; L-glutamate 5-semialdehyde from L-glutamate: step 2/2. Functionally, catalyzes the NADPH-dependent reduction of L-glutamate 5-phosphate into L-glutamate 5-semialdehyde and phosphate. The product spontaneously undergoes cyclization to form 1-pyrroline-5-carboxylate. This is Gamma-glutamyl phosphate reductase from Streptococcus thermophilus (strain CNRZ 1066).